A 194-amino-acid polypeptide reads, in one-letter code: Ion-translocating oxidoreductase complex subunit A (194 aa).

Helical transmembrane passes span 4–24 (LVLI…QFLG), 39–59 (IGLS…SYLV), 71–91 (FLRT…TEMV), 102–122 (VLGI…VALL), 131–151 (FITA…VLVL), and 172–192 (AIGM…AGLI).

This sequence belongs to the NqrDE/RnfAE family. As to quaternary structure, the complex is composed of six subunits: RnfA, RnfB, RnfC, RnfD, RnfE and RnfG.

It localises to the cell inner membrane. Its function is as follows. Part of a membrane-bound complex that couples electron transfer with translocation of ions across the membrane. The sequence is that of Ion-translocating oxidoreductase complex subunit A from Ectopseudomonas mendocina (strain ymp) (Pseudomonas mendocina).